Here is a 318-residue protein sequence, read N- to C-terminus: Pantothenate kinase (318 aa).

ATP is bound at residue glycine 96–serine 103.

This sequence belongs to the prokaryotic pantothenate kinase family.

The protein localises to the cytoplasm. The enzyme catalyses (R)-pantothenate + ATP = (R)-4'-phosphopantothenate + ADP + H(+). The protein operates within cofactor biosynthesis; coenzyme A biosynthesis; CoA from (R)-pantothenate: step 1/5. The protein is Pantothenate kinase of Coxiella burnetii (strain CbuK_Q154) (Coxiella burnetii (strain Q154)).